Consider the following 194-residue polypeptide: Chorion class B protein ERB4 (194 aa).

The N-terminal stretch at Met1 to Ser20 is a signal peptide. Positions Cys22–Ala72 are left arm. The tract at residues Ser73 to Ile128 is central domain. Positions Asp129–Tyr194 are right arm (Gly-rich tandem repeats).

This sequence belongs to the chorion protein family.

Its function is as follows. This protein is one of many from the eggshell of the silk moth. The protein is Chorion class B protein ERB4 of Bombyx mori (Silk moth).